The sequence spans 345 residues: Phosphate acyltransferase (345 aa).

This sequence belongs to the PlsX family. As to quaternary structure, homodimer. Probably interacts with PlsY.

The protein localises to the cytoplasm. The catalysed reaction is a fatty acyl-[ACP] + phosphate = an acyl phosphate + holo-[ACP]. The protein operates within lipid metabolism; phospholipid metabolism. Catalyzes the reversible formation of acyl-phosphate (acyl-PO(4)) from acyl-[acyl-carrier-protein] (acyl-ACP). This enzyme utilizes acyl-ACP as fatty acyl donor, but not acyl-CoA. This is Phosphate acyltransferase from Anaplasma phagocytophilum (strain HZ).